The sequence spans 95 residues: Fluoride-specific ion channel FluC 1 (95 aa).

3 consecutive transmembrane segments (helical) span residues 23 to 43 (LIDAPLALLGINLLGSFLMGW), 49 to 69 (LWGTGFLGGFTSFSAFALLMF), and 70 to 90 (DGAYLYAAVTVIGCVAAWLLG). Na(+)-binding residues include Gly-56 and Thr-59.

It belongs to the fluoride channel Fluc/FEX (TC 1.A.43) family.

It localises to the cell membrane. It catalyses the reaction fluoride(in) = fluoride(out). With respect to regulation, na(+) is not transported, but it plays an essential structural role and its presence is essential for fluoride channel function. In terms of biological role, fluoride-specific ion channel. Important for reducing fluoride concentration in the cell, thus reducing its toxicity. The sequence is that of Fluoride-specific ion channel FluC 1 from Corynebacterium diphtheriae (strain ATCC 700971 / NCTC 13129 / Biotype gravis).